The following is a 278-amino-acid chain: HTH-type transcriptional activator RhaS (278 aa).

In terms of domain architecture, HTH araC/xylS-type spans 174–272 (NQLLAWLEDH…DWSPRDIRQG (99 aa)). 2 DNA-binding regions (H-T-H motif) span residues 191–212 (EEVA…KQQT) and 239–262 (VTDI…RREF).

In terms of assembly, binds DNA as a dimer.

It is found in the cytoplasm. Functionally, activates expression of the rhaBAD and rhaT operons. This chain is HTH-type transcriptional activator RhaS, found in Klebsiella pneumoniae (strain 342).